Consider the following 251-residue polypeptide: 3-isopropylmalate dehydratase small subunit 1 (251 aa).

The N-terminal 59 residues, 1-59, are a transit peptide targeting the chloroplast; it reads MAASLQSANPTLSRTLASPNKPSSFATFRSPFLRFNSTSVASNFKPLVSREASSSFVTR.

The protein belongs to the LeuD family. In terms of assembly, heterodimer of the large LEUC/IIL1 subunit and the small LEUD (SSU1, SSU2 or SSU3) subunits. As to expression, expressed at low levels in roots, root tips, at the basis of the hypocotyls, and in emerging leaves. In young seedlings, expressed in cotyledon epidermal cells. In hypocotyls, expressed in peripheral cells. In seedling roots, expressed in the epidermis, including root hairs, and throughout the cortex. In rosette leaves, expressed in the upper and lower epidermis. In roots of adult plants, expressed in the root tips and cortex of the mature root enclosing the stele. In flowering stalks, expressed in the epidermis. Expressed in the carpel epidermis.

It is found in the plastid. The protein localises to the chloroplast stroma. The catalysed reaction is (2R,3S)-3-isopropylmalate = (2S)-2-isopropylmalate. Its pathway is amino-acid biosynthesis; L-leucine biosynthesis; L-leucine from 3-methyl-2-oxobutanoate: step 2/4. In terms of biological role, catalyzes the isomerization between 2-isopropylmalate and 3-isopropylmalate, via the formation of 2-isopropylmaleate. Plays an essential role in leucine biosynthesis. Functions in both the biosynthesis of leucine, and in the methionine chain elongation pathway of aliphatic glucosinolate formation. Plays an essential role in female gametophyte development. This Arabidopsis thaliana (Mouse-ear cress) protein is 3-isopropylmalate dehydratase small subunit 1.